A 211-amino-acid chain; its full sequence is Mitotic spindle assembly checkpoint protein MAD2B (211 aa).

The region spanning 13–203 (QVVADILCEF…SDILKMQLYV (191 aa)) is the HORMA domain.

In terms of assembly, homooligomer. Interacts with rev1. Interacts with rev3l. Interacts with fzr1 (in complex with the anaphase promoting complex APC). May interact with cdc20.

The protein resides in the nucleus. Its subcellular location is the cytoplasm. The protein localises to the cytoskeleton. It is found in the spindle. In terms of biological role, adapter protein able to interact with different proteins and involved in different biological processes. Mediates the interaction between the error-prone DNA polymerase zeta catalytic subunit rev3l and the inserter polymerase rev1, thereby mediating the second polymerase switching in translesion DNA synthesis. Translesion DNA synthesis releases the replication blockade of replicative polymerases, stalled in presence of DNA lesions. May also play a role in signal transduction in response to DNA damage. May regulate the activation of the anaphase promoting complex APC thereby regulating progression through the cell cycle. Through transcriptional regulation may play a role in epithelial-mesenchymal transdifferentiation. Its function is as follows. Inhibits the fzr1-APC complex activity during mitosis. Plays a role in progression of mitosis. This chain is Mitotic spindle assembly checkpoint protein MAD2B (mad2l2), found in Xenopus laevis (African clawed frog).